An 824-amino-acid chain; its full sequence is Frameshifted structural polyprotein (824 aa).

Residues 1-10 (MEFIPTQTFY) show a composition bias toward polar residues. The segment at 1-104 (MEFIPTQTFY…KKKKPGRRER (104 aa)) is disordered. A compositionally biased stretch (low complexity) spans 22–44 (RPTIQVIRPRPRPQRQAGQLAQL). Residues 36–68 (RQAGQLAQLISAVNKLTMRAVPQQKPRKNRKNK) are host transcription inhibition. Positions 60–72 (KPRKNRKNKKQKQ) are enriched in basic residues. A Nuclear localization signal motif is present at residues 61–99 (PRKNRKNKKQKQKQQAPQNNTNQKKQPPKKKPAQKKKKP). Positions 73–85 (KQQAPQNNTNQKK) are enriched in low complexity. Positions 84–114 (KKQPPKKKPAQKKKKPGRRERMCMKIENDCI) are binding to the viral RNA. Residues 86 to 101 (QPPKKKPAQKKKKPGR) show a composition bias toward basic residues. Ribosome-binding stretches follow at residues 91–100 (KPAQKKKKPG) and 99–113 (PGRR…ENDC). A disulfide bond links cysteine 113 and cysteine 128. Positions 113–261 (CIFEVKHEGK…KITPEGAEEW (149 aa)) constitute a Peptidase S3 domain. Histidine 139 acts as the Charge relay system in catalysis. The short motif at 144 to 154 (IDNADLAKLAF) is the Nuclear export signal element. The active-site Charge relay system is aspartate 161. Positions 183–193 (PEGYYNWHHGA) are dimerization of the capsid protein. The Charge relay system role is filled by serine 213. A dimerization of the capsid protein region spans residues 219 to 223 (DNKGR). The functions as an uncleaved signal peptide for the precursor of protein E3/E2 stretch occupies residues 262–274 (SLAIPVMCLLANT). The Extracellular segment spans residues 262–692 (SLAIPVMCLL…YYYELYPTMT (431 aa)). N-linked (GlcNAc...) asparagine; by host glycosylation is found at asparagine 273, asparagine 588, and asparagine 670. The helical transmembrane segment at 693 to 713 (VVVVSVASFILLSMVGMAVGM) threads the bilayer. The Cytoplasmic portion of the chain corresponds to 714–748 (CMCARRRCITPYELTPGATVPFLLSLICCIRTAKA). S-palmitoyl cysteine; by host attachment occurs at residues cysteine 721, cysteine 741, and cysteine 742. The interval 721 to 741 (CITPYELTPGATVPFLLSLIC) is transient transmembrane before p62-6K protein processing. At 749–763 (ATYQEAAVYLWNEQQ) the chain is on the extracellular side. A helical membrane pass occupies residues 764–784 (PLFWLQALIPLAALIVLCNCL). Topologically, residues 785-795 (RLLPCCCKTLA) are cytoplasmic.

Belongs to the alphavirus frameshifted structural polyprotein family. In terms of assembly, homodimer. Homomultimer. Interacts with host karyopherin KPNA4; this interaction allows the nuclear import of the viral capsid protein. Interacts with spike glycoprotein E2. Interacts with host IRAK1; the interaction leads to inhibition of IRAK1-dependent signaling. The precursor of protein E3/E2 and E1 form a heterodimer shortly after synthesis. As to quaternary structure, processing of the precursor of protein E3/E2 into E2 and E3 results in a heterodimer of the spike glycoproteins E2 and E1. Spike at virion surface are constituted of three E2-E1 heterodimers. Interacts with 6K protein. Interacts with host MXRA8; this interaction mediates virus entry. In terms of processing, specific enzymatic cleavages in vivo yield mature proteins. Capsid protein is auto-cleaved during polyprotein translation, unmasking a signal peptide at the N-terminus of the precursor of E3/E2. The remaining polyprotein is then targeted to the host endoplasmic reticulum, where host signal peptidase cleaves it into pE2 and TF. pE2 is further processed to mature E3 and E2 by host furin in trans-Golgi vesicle. Palmitoylated via thioester bonds. These palmitoylations may induce disruption of the C-terminus transmembrane. This would result in the reorientation of E2 C-terminus from lumenal to cytoplasmic side. Post-translationally, palmitoylated via thioester bonds.

The protein resides in the virion. The protein localises to the host cytoplasm. Its subcellular location is the host cell membrane. It is found in the host nucleus. It localises to the virion membrane. It carries out the reaction Autocatalytic release of the core protein from the N-terminus of the togavirus structural polyprotein by hydrolysis of a -Trp-|-Ser- bond.. Its function is as follows. Forms an icosahedral capsid with a T=4 symmetry composed of 240 copies of the capsid protein surrounded by a lipid membrane through which penetrate 80 spikes composed of trimers of E1-E2 heterodimers. The capsid protein binds to the viral RNA genome at a site adjacent to a ribosome binding site for viral genome translation following genome release. Possesses a protease activity that results in its autocatalytic cleavage from the nascent structural protein. Following its self-cleavage, the capsid protein transiently associates with ribosomes, and within several minutes the protein binds to viral RNA and rapidly assembles into icosahedric core particles. The resulting nucleocapsid eventually associates with the cytoplasmic domain of the spike glycoprotein E2 at the cell membrane, leading to budding and formation of mature virions. In case of infection, new virions attach to target cells and after clathrin-mediated endocytosis their membrane fuses with the host endosomal membrane. This leads to the release of the nucleocapsid into the cytoplasm, followed by an uncoating event necessary for the genomic RNA to become accessible. The uncoating might be triggered by the interaction of capsid proteins with ribosomes. Binding of ribosomes would release the genomic RNA since the same region is genomic RNA-binding and ribosome-binding. Specifically inhibits interleukin-1 receptor-associated kinase 1/IRAK1-dependent signaling during viral entry, representing a means by which the alphaviruses may evade innate immune detection and activation prior to viral gene expression. Provides the signal sequence for the translocation of the precursor of protein E3/E2 to the host endoplasmic reticulum. Furin-cleaved E3 remains associated with spike glycoprotein E1 and mediates pH protection of the latter during the transport via the secretory pathway. After virion release from the host cell, the assembly protein E3 is gradually released in the extracellular space. In terms of biological role, plays a role in viral attachment to target host cell, by binding to the cell receptor. Synthesized as a p62 precursor which is processed by furin at the cell membrane just before virion budding, giving rise to E2-E1 heterodimer. The p62-E1 heterodimer is stable, whereas E2-E1 is unstable and dissociate at low pH. p62 is processed at the last step, presumably to avoid E1 fusion activation before its final export to cell surface. E2 C-terminus contains a transitory transmembrane that would be disrupted by palmitoylation, resulting in reorientation of the C-terminal tail from lumenal to cytoplasmic side. This step is critical since E2 C-terminus is involved in budding by interacting with capsid proteins. This release of E2 C-terminus in cytoplasm occurs lately in protein export, and precludes premature assembly of particles at the endoplasmic reticulum membrane. Functionally, plays a role in viral assembly and release. The sequence is that of Frameshifted structural polyprotein from Aedes aegypti (Yellowfever mosquito).